Consider the following 393-residue polypeptide: Pyrimidine monooxygenase RutA (393 aa).

Residues 79 to 80, N145, E154, 170 to 171, and S220 contribute to the FMN site; these read IK and RY.

Belongs to the NtaA/SnaA/DszA monooxygenase family. RutA subfamily.

The catalysed reaction is uracil + FMNH2 + NADH + O2 = (Z)-3-ureidoacrylate + FMN + NAD(+) + H2O + H(+). It carries out the reaction thymine + FMNH2 + NADH + O2 = (Z)-2-methylureidoacrylate + FMN + NAD(+) + H2O + H(+). Catalyzes the pyrimidine ring opening between N-3 and C-4 by an unusual flavin hydroperoxide-catalyzed mechanism, adding oxygen atoms in the process to yield ureidoacrylate peracid, that immediately reacts with FMN forming ureidoacrylate and FMN-N(5)-oxide. The FMN-N(5)-oxide reacts spontaneously with NADH to produce FMN. Requires the flavin reductase RutF to regenerate FMN in vivo. The sequence is that of Pyrimidine monooxygenase RutA from Escherichia coli O18:K1:H7 (strain IHE3034 / ExPEC).